The primary structure comprises 241 residues: DNA repair protein RecO (241 aa).

Belongs to the RecO family.

Involved in DNA repair and RecF pathway recombination. The protein is DNA repair protein RecO of Dinoroseobacter shibae (strain DSM 16493 / NCIMB 14021 / DFL 12).